Here is a 138-residue protein sequence, read N- to C-terminus: Large ribosomal subunit protein uL16 (138 aa).

Residues 1 to 19 (MLIPRKVAHRKQHHPKRTG) are compositionally biased toward basic residues. The tract at residues 1-22 (MLIPRKVAHRKQHHPKRTGAAK) is disordered.

It belongs to the universal ribosomal protein uL16 family. As to quaternary structure, part of the 50S ribosomal subunit.

Its function is as follows. Binds 23S rRNA and is also seen to make contacts with the A and possibly P site tRNAs. The protein is Large ribosomal subunit protein uL16 of Parafrankia sp. (strain EAN1pec).